The primary structure comprises 355 residues: Aromatic amino acid aminotransferase (355 aa).

An N6-(pyridoxal phosphate)lysine modification is found at Lys217.

This sequence belongs to the class-II pyridoxal-phosphate-dependent aminotransferase family. As to quaternary structure, homodimer. Requires pyridoxal 5'-phosphate as cofactor.

It carries out the reaction an aromatic L-alpha-amino acid + 2-oxoglutarate = an aromatic oxo-acid + L-glutamate. Its function is as follows. Aminotransferase that catalyzes the conversion of aromatic amino acids and 2-oxoglutarate into corresponding aromatic oxo acids and L-glutamate. The chain is Aromatic amino acid aminotransferase from Mycolicibacterium paratuberculosis (strain ATCC BAA-968 / K-10) (Mycobacterium paratuberculosis).